Consider the following 884-residue polypeptide: Cytosolic carboxypeptidase-like protein 5 (884 aa).

Residues 157-570 form the Peptidase M14 domain; that stretch reads YPFSYSDCQD…AMAIAALDMA (414 aa). Residues H252 and E255 each coordinate Zn(2+). Disordered stretches follow at residues 343-364 and 376-401; these read HPQSPSEHQHSPCLPPDAPLSD and HLGHTSDGDSPEDWTQTRPAEQKASG. Residue H434 coordinates Zn(2+). Residue E516 is the Proton donor/acceptor of the active site. Disordered regions lie at residues 603–737 and 784–859; these read LSST…HSTG and QVRP…RICY. Positions 620-635 are enriched in polar residues; it reads PPRSNSGLPVSCSENP. 2 stretches are compositionally biased toward low complexity: residues 641–666 and 714–737; these read SFSTGTSAGGSSSSQQNSPQMKNSPS and PTSSSLAPSPNPTSSSPASSHSTG. S839 carries the phosphoserine modification. Polar residues predominate over residues 846–857; sequence ISCSLSDSQSRI.

Belongs to the peptidase M14 family. Requires Zn(2+) as cofactor.

It localises to the cytoplasm. The protein resides in the cytosol. Its subcellular location is the nucleus. The protein localises to the cytoskeleton. It is found in the spindle. It localises to the midbody. It catalyses the reaction gamma-L-glutamyl-L-glutamyl-[protein] + H2O = L-glutamyl-[protein] + L-glutamate. It carries out the reaction (L-glutamyl)(n+1)-gamma-L-glutamyl-L-glutamyl-[protein] + H2O = (L-glutamyl)(n)-gamma-L-glutamyl-L-glutamyl-[protein] + L-glutamate. The catalysed reaction is C-terminal L-alpha-aminoacyl-L-glutamyl-[tubulin] + H2O = C-terminal L-alpha-aminoacyl-[tubulin] + L-glutamate. The enzyme catalyses C-terminal L-alpha-aminoacyl-L-glutamyl-L-glutamyl-[tubulin] + H2O = C-terminal L-alpha-aminoacyl-L-glutamyl-[tubulin] + L-glutamate. Functionally, metallocarboxypeptidase that mediates deglutamylation of tubulin and non-tubulin target proteins. Catalyzes the removal of polyglutamate side chains present on the gamma-carboxyl group of glutamate residues within the C-terminal tail of alpha- and beta-tubulin. Cleaves alpha- and gamma-linked polyglutamate tubulin side-chain, as well as the branching point glutamate. Also catalyzes the removal of alpha-linked glutamate residues from the carboxy-terminus of alpha-tubulin. Mediates deglutamylation of nucleotidyltransferase CGAS, leading to CGAS antiviral defense response activation. This is Cytosolic carboxypeptidase-like protein 5 (AGBL5) from Ailuropoda melanoleuca (Giant panda).